A 124-amino-acid chain; its full sequence is Small ribosomal subunit protein bS6 (124 aa).

A disordered region spans residues 96–124 (ETGPSPMMKEVQREEAKKAAAAQPAEAQA). A compositionally biased stretch (low complexity) spans 114–124 (AAAAQPAEAQA).

Belongs to the bacterial ribosomal protein bS6 family.

Its function is as follows. Binds together with bS18 to 16S ribosomal RNA. The chain is Small ribosomal subunit protein bS6 from Burkholderia orbicola (strain AU 1054).